The chain runs to 571 residues: MESNMQNLLEKLRPLVGARAWDYCVLWRLNEDQRFVKWMGCCCGGTELIAENGTEEFSYGGCRDVMFHHPRTKSCEFLSHLPASIPLDSGIYAETLLTNQTGWLSESSEPSFMQETICTRVLIPIPGGLVELFATRHVAEDQNVVDFVMGHCNMLMDDSVTINMMVADEVESKPYGMLSGDIQQKGSKEEDMMNLPSSYDISADQIRLNFLPQMSDYETQHLKMKSDYHHQALGYLPENGNKEMMGMNPFNTVEEDGIPVIGEPSLLVNEQQVVNDKDMNENGRVDSGSDCSDQIDDEDDPKYKKKSGKGSQAKNLMAERRRRKKLNDRLYALRSLVPRITKLDRASILGDAINYVKELQNEAKELQDELEENSETEDGSNRPQGGMSLNGTVVTGFHPGLSCNSNVPSVKQDVDLENSNDKGQEMEPQVDVAQLDGREFFVKVICEYKPGGFTRLMEALDSLGLEVTNANTTRYLSLVSNVFKVEKNDNEMVQAEHVRNSLLEITRNTSRGWQDDQMATGSMQNEKNEVDYQHYDDHQHHNGHHHPFDHQMNQSAHHHHHHQHINHYHNQ.

Positions 275–284 (NDKDMNENGR) are enriched in basic and acidic residues. Disordered regions lie at residues 275 to 321 (NDKD…AERR), 365 to 390 (ELQDELEENSETEDGSNRPQGGMSLN), and 536 to 571 (DDHQHHNGHHHPFDHQMNQSAHHHHHHQHINHYHNQ). The 50-residue stretch at 310-359 (GSQAKNLMAERRRRKKLNDRLYALRSLVPRITKLDRASILGDAINYVKEL) folds into the bHLH domain. Over residues 368–378 (DELEENSETED) the composition is skewed to acidic residues. Polar residues predominate over residues 381–390 (NRPQGGMSLN). Basic residues predominate over residues 556–571 (AHHHHHHQHINHYHNQ).

In terms of assembly, homodimer. Interacts with ASHR3. As to expression, mostly expressed in closed, post-meiotic buds, and, to a lower extent, in pre-meiotic buds. Detected in leaves, stems, and flowers.

Its subcellular location is the nucleus. In terms of biological role, transcription factor. Plays a crucial role in tapetum development. Required for male fertility and pollen differentiation, especially during the post-meiotic transcriptional regulation of microspore development within the developing anther. Binds E-box regions in the AHL16/TEK promoter. The sequence is that of Transcription factor ABORTED MICROSPORES (AMS) from Arabidopsis thaliana (Mouse-ear cress).